The chain runs to 234 residues: Ribonuclease HII (234 aa).

The RNase H type-2 domain maps to 16-207 (ALVAGVDEAG…VRRMLTPKAI (192 aa)). A divalent metal cation contacts are provided by Asp-22, Glu-23, and Asp-115.

The protein belongs to the RNase HII family. Mn(2+) is required as a cofactor. It depends on Mg(2+) as a cofactor.

The protein resides in the cytoplasm. The enzyme catalyses Endonucleolytic cleavage to 5'-phosphomonoester.. Its function is as follows. Endonuclease that specifically degrades the RNA of RNA-DNA hybrids. This is Ribonuclease HII from Xylella fastidiosa (strain M12).